Here is a 354-residue protein sequence, read N- to C-terminus: Transcription factor BHLH3 (354 aa).

The segment at 124–143 is disordered; that stretch reads VAEEETSGDKALLHGGGGSS. A basic motif region spans residues 178-191; it reads GTPSKNLMAERRRR. Residues 178–227 form the bHLH domain; it reads GTPSKNLMAERRRRKRLNDRLSMLRSIVPKISKMDRTSILGDTIDYVKEL. The helix-loop-helix motif stretch occupies residues 192-227; sequence KRLNDRLSMLRSIVPKISKMDRTSILGDTIDYVKEL.

The protein belongs to the bHLH protein family. Interacts with LAX1. Phosphorylated by MAPK3 and MAPK6.

The protein resides in the nucleus. The protein localises to the cytoplasm. Transcription factor involved in defense responses that functions downstream of RAC1 and upstream of PAL1 and WRKY19 genes. The sequence is that of Transcription factor BHLH3 from Oryza sativa subsp. japonica (Rice).